We begin with the raw amino-acid sequence, 94 residues long: Myosuppressin (94 aa).

The N-terminal stretch at 1–24 (MMSPTLMILISITTMAILSGESFG) is a signal peptide. Residues 25–80 (AMPAQCNSEFLEELPPRLRKICVAIARIWDAREMNDFVDDREYRENLPRYDSSVKR) constitute a propeptide that is removed on maturation. Pyrrolidone carboxylic acid is present on Gln-81. Phe-90 carries the post-translational modification Phenylalanine amide.

In terms of tissue distribution, expressed throughout the nervous system (at protein level).

It is found in the secreted. Myoinhibiting neuropeptide. This Camponotus floridanus (Florida carpenter ant) protein is Myosuppressin.